The chain runs to 265 residues: Apolipoprotein A-I (265 aa).

Residues 1–20 (METKAVVLTLAVLFLTGSQA) form the signal peptide. A run of 2 repeats spans residues 69-90 (LKIL…EQMR) and 91-112 (PIFQ…EVLN). The interval 69–265 (LKILDNWDTL…DEATKKLNSQ (197 aa)) is 10 X approximate tandem repeats. A 3; half-length repeat occupies 113 to 123 (KDLEELKQKVQ). 5 repeat units span residues 124–145 (PYLD…QKMA), 146–167 (PLGT…EKLG), 168–189 (PLGE…TQLA), 190–209 (PYTE…LKES), and 210–230 (NLAE…ENAK). Position 195 is a methionine sulfoxide (Met195). The 9; half-length repeat unit spans residues 231 to 241 (PALEDFRQGLM). At Met241 the chain carries Methionine sulfoxide. Residues 242–265 (PVLEGFQKSVLAALDEATKKLNSQ) form repeat 10.

This sequence belongs to the apolipoprotein A1/A4/E family. In terms of assembly, homodimer. Interacts with APOA1BP and CLU. Component of a sperm activating protein complex (SPAP), consisting of APOA1, an immunoglobulin heavy chain, an immunoglobulin light chain and albumin. Interacts with NDRG1. Interacts with SCGB3A2. Interacts with NAXE and YJEFN3. Post-translationally, glycosylated. In terms of processing, palmitoylated. Phosphorylation sites are present in the extracellular medium. As to expression, major protein of plasma HDL, also found in chylomicrons.

The protein localises to the secreted. Functionally, participates in the reverse transport of cholesterol from tissues to the liver for excretion by promoting cholesterol efflux from tissues and by acting as a cofactor for the lecithin cholesterol acyltransferase (LCAT). As part of the SPAP complex, activates spermatozoa motility. The sequence is that of Apolipoprotein A-I (APOA1) from Orycteropus afer (Aardvark).